Here is a 247-residue protein sequence, read N- to C-terminus: Vacuolar iron transporter 1 (247 aa).

The Cytoplasmic portion of the chain corresponds to 1–33; sequence MVIAGVSPPTPSSENLLQEHEEKHFTATDVVRD. The chain crosses the membrane as a helical span at residues 34–54; that stretch reads VIIGVSDGLTVPFALAAGLSG. Over 55 to 60 the chain is Vacuolar; it reads ANVPSS. The chain crosses the membrane as a helical span at residues 61-81; the sequence is LILTAGIAEVAAGAISMGLGG. Over 82–167 the chain is Cytoplasmic; the sequence is YLAAKSEEDH…PRRALESAMT (86 aa). Fe cation contacts are provided by glutamate 99, glutamate 102, glutamate 110, glutamate 113, methionine 146, and glutamate 150. Residues 168 to 188 form a helical membrane-spanning segment; that stretch reads IALAYVVGGLVPLSPYFFIPF. Over 189-191 the chain is Vacuolar; it reads AKQ. Residues 192-212 form a helical membrane-spanning segment; that stretch reads AMITSIAVTLLALVVFGYIKG. The Cytoplasmic portion of the chain corresponds to 213–219; it reads RFTGSNP. A helical membrane pass occupies residues 220–240; that stretch reads VLSSIQTAIIGALASAAAYAM. The Vacuolar portion of the chain corresponds to 241–247; the sequence is AKAVQSV.

It belongs to the CCC1 family. In terms of tissue distribution, expressed at high levels in the blue epidermal cells of the inner bottom part of the petal (at protein level). No detectable expression in parenchyma and epidermis of the purple segments of the petal, parenchyma of the blue segments, leaf, stem, bulb and root (at protein level). High levels of mRNA in the blue epidermal cells of the inner bottom part of the petal. Low-levels of mRNA in the purple segments of the petal, stem, leaf, root, bulb and pistil.

It localises to the vacuole membrane. It catalyses the reaction Fe(2+)(in) = Fe(2+)(out). In terms of biological role, vacuolar iron transporter involved in the transfer of iron ions from the cytosol to the vacuole for intracellular iron storage. Plays an essential role in the development of blue coloration in tulip petals most likely due to the accumulation of ferrous ions that can form complexes with anthocyanins. The protein is Vacuolar iron transporter 1 of Tulipa gesneriana (Garden tulip).